Consider the following 339-residue polypeptide: Ketol-acid reductoisomerase (NADP(+)) (339 aa).

The KARI N-terminal Rossmann domain maps to 1-182 (MRVYYDRDAD…GGGRSGIIET (182 aa)). Residues 24–27 (YGSQ), Arg-48, Ser-51, Thr-53, and 83–86 (DELQ) contribute to the NADP(+) site. Residue His-108 is part of the active site. Position 134 (Gly-134) interacts with NADP(+). The region spanning 183 to 328 (SFREECETDL…EKLRAMMPWI (146 aa)) is the KARI C-terminal knotted domain. Mg(2+)-binding residues include Asp-191, Glu-195, Glu-227, and Glu-231. Ser-252 contacts substrate.

Belongs to the ketol-acid reductoisomerase family. It depends on Mg(2+) as a cofactor.

It carries out the reaction (2R)-2,3-dihydroxy-3-methylbutanoate + NADP(+) = (2S)-2-acetolactate + NADPH + H(+). The enzyme catalyses (2R,3R)-2,3-dihydroxy-3-methylpentanoate + NADP(+) = (S)-2-ethyl-2-hydroxy-3-oxobutanoate + NADPH + H(+). Its pathway is amino-acid biosynthesis; L-isoleucine biosynthesis; L-isoleucine from 2-oxobutanoate: step 2/4. The protein operates within amino-acid biosynthesis; L-valine biosynthesis; L-valine from pyruvate: step 2/4. Its function is as follows. Involved in the biosynthesis of branched-chain amino acids (BCAA). Catalyzes an alkyl-migration followed by a ketol-acid reduction of (S)-2-acetolactate (S2AL) to yield (R)-2,3-dihydroxy-isovalerate. In the isomerase reaction, S2AL is rearranged via a Mg-dependent methyl migration to produce 3-hydroxy-3-methyl-2-ketobutyrate (HMKB). In the reductase reaction, this 2-ketoacid undergoes a metal-dependent reduction by NADPH to yield (R)-2,3-dihydroxy-isovalerate. The sequence is that of Ketol-acid reductoisomerase (NADP(+)) from Paramagnetospirillum magneticum (strain ATCC 700264 / AMB-1) (Magnetospirillum magneticum).